The following is a 322-amino-acid chain: Replication factor C small subunit (322 aa).

46–53 (GSAGIGKT) is an ATP binding site.

Belongs to the activator 1 small subunits family. RfcS subfamily. In terms of assembly, heteromultimer composed of small subunits (RfcS) and large subunits (RfcL).

Functionally, part of the RFC clamp loader complex which loads the PCNA sliding clamp onto DNA. The polypeptide is Replication factor C small subunit (Methanoculleus marisnigri (strain ATCC 35101 / DSM 1498 / JR1)).